A 64-amino-acid polypeptide reads, in one-letter code: MSEETIVNCPTCGKNVVWGEQSPFRPFCSKRCQLIDLGEWAAEEKRIPSAGDLSDSDDWSEQQP.

Zn(2+) is bound by residues Cys9, Cys12, Cys28, and Cys32. The segment at 45-64 (KRIPSAGDLSDSDDWSEQQP) is disordered. Positions 54 to 64 (SDSDDWSEQQP) are enriched in acidic residues.

Belongs to the DNA gyrase inhibitor YacG family. As to quaternary structure, interacts with GyrB. Zn(2+) is required as a cofactor.

Its function is as follows. Inhibits all the catalytic activities of DNA gyrase by preventing its interaction with DNA. Acts by binding directly to the C-terminal domain of GyrB, which probably disrupts DNA binding by the gyrase. The sequence is that of DNA gyrase inhibitor YacG from Klebsiella pneumoniae (strain 342).